Reading from the N-terminus, the 343-residue chain is RNA-binding protein 43 (343 aa).

An RRM domain is found at 15-90 (RTVVVSGLPV…PLLTVSHFSE (76 aa)). The interval 170–200 (RRNWTGQNPRRVLQKNENSAPTLGTSVPEPA) is disordered. Positions 184 to 194 (KNENSAPTLGT) are enriched in polar residues.

In Rattus norvegicus (Rat), this protein is RNA-binding protein 43 (Rbm43).